The following is a 120-amino-acid chain: Large ribosomal subunit protein bL20 (120 aa).

This sequence belongs to the bacterial ribosomal protein bL20 family.

In terms of biological role, binds directly to 23S ribosomal RNA and is necessary for the in vitro assembly process of the 50S ribosomal subunit. It is not involved in the protein synthesizing functions of that subunit. This chain is Large ribosomal subunit protein bL20, found in Methylacidiphilum infernorum (isolate V4) (Methylokorus infernorum (strain V4)).